The primary structure comprises 358 residues: Gentisate 1,2-dioxygenase (358 aa).

One can recognise a Cupin type-2 domain in the interval 99 to 165 (QYLGPREVAP…VTDEPMAWLD (67 aa)). Positions 185–215 (DELSTRETPERSRGERLWGHPGLRPIGRPDQ) are disordered. Over residues 187 to 202 (LSTRETPERSRGERLW) the composition is skewed to basic and acidic residues.

This sequence belongs to the gentisate 1,2-dioxygenase family.

The catalysed reaction is 2,5-dihydroxybenzoate + O2 = 3-maleylpyruvate + H(+). In terms of biological role, involved in the degradation of salicylate via a pathway involving coenzyme A derivative. Catalyzes the oxygen-dependent ring fission of gentisate between the carboxyl and proximal hydroxyl groups at positions 1 and 2 of the aromatic ring to form maleylpyruvate. The substrate specificity is strong, since salicylate, catechol, protocatechuic acid, homogenetisate, 2,3-dihydroxybenzoate or 5-aminosalicylate cannot substitute for gentisate in the ring cleavage reaction. The chain is Gentisate 1,2-dioxygenase from Streptomyces sp.